The primary structure comprises 329 residues: MVSQLTDAFARKFYYLRLSITDVCNFRCTYCLPDGYQANGTNPHRFLSLDEIRRVSRAFAELGTEKVRLTGGEPSLRRDFVDIIAAIRENPAIRTLAVTTNGYRLARDVAQWRDAGLTALNVSVDSLDARQFHAITGQDKFRQVMDGIDAAFDCGFAKVKVNTVLMRDVNAGSLQTFLDWIKHRPIQLRFIELMETGEGGELFRRHHVSGEVIRQQLLQQGWQQQQRARSDGPAQVFCHPDYEGEIGLIMPYEKDFCLSCNRLRVSAIGNLHLCLFGEQGIPLRDLLADDRHLNDLKMRISGGLSTKKQTHFLHEGNSGITQNLSFIGG.

The Radical SAM core domain maps to 8-234 (AFARKFYYLR…QQRARSDGPA (227 aa)). Residue R17 coordinates GTP. Residues C24 and C28 each contribute to the [4Fe-4S] cluster site. Residue Y30 coordinates S-adenosyl-L-methionine. Position 31 (C31) interacts with [4Fe-4S] cluster. R68 is a binding site for GTP. Position 72 (G72) interacts with S-adenosyl-L-methionine. T99 is a binding site for GTP. An S-adenosyl-L-methionine-binding site is contributed by S123. K160 contacts GTP. M194 provides a ligand contact to S-adenosyl-L-methionine. [4Fe-4S] cluster is bound by residues C257 and C260. 262 to 264 (RLR) provides a ligand contact to GTP. C274 contacts [4Fe-4S] cluster.

This sequence belongs to the radical SAM superfamily. MoaA family. Monomer and homodimer. [4Fe-4S] cluster serves as cofactor.

It carries out the reaction GTP + AH2 + S-adenosyl-L-methionine = (8S)-3',8-cyclo-7,8-dihydroguanosine 5'-triphosphate + 5'-deoxyadenosine + L-methionine + A + H(+). It functions in the pathway cofactor biosynthesis; molybdopterin biosynthesis. In terms of biological role, catalyzes the cyclization of GTP to (8S)-3',8-cyclo-7,8-dihydroguanosine 5'-triphosphate. This Pectobacterium atrosepticum (strain SCRI 1043 / ATCC BAA-672) (Erwinia carotovora subsp. atroseptica) protein is GTP 3',8-cyclase.